The primary structure comprises 154 residues: 6,7-dimethyl-8-ribityllumazine synthase (154 aa).

5-amino-6-(D-ribitylamino)uracil-binding positions include F15, 47–49 (TFD), and 71–73 (AVI). A (2S)-2-hydroxy-3-oxobutyl phosphate-binding site is contributed by 76 to 77 (ET). Residue H79 is the Proton donor of the active site. L104 serves as a coordination point for 5-amino-6-(D-ribitylamino)uracil. Position 119 (R119) interacts with (2S)-2-hydroxy-3-oxobutyl phosphate.

The protein belongs to the DMRL synthase family.

The catalysed reaction is (2S)-2-hydroxy-3-oxobutyl phosphate + 5-amino-6-(D-ribitylamino)uracil = 6,7-dimethyl-8-(1-D-ribityl)lumazine + phosphate + 2 H2O + H(+). It participates in cofactor biosynthesis; riboflavin biosynthesis; riboflavin from 2-hydroxy-3-oxobutyl phosphate and 5-amino-6-(D-ribitylamino)uracil: step 1/2. In terms of biological role, catalyzes the formation of 6,7-dimethyl-8-ribityllumazine by condensation of 5-amino-6-(D-ribitylamino)uracil with 3,4-dihydroxy-2-butanone 4-phosphate. This is the penultimate step in the biosynthesis of riboflavin. This chain is 6,7-dimethyl-8-ribityllumazine synthase, found in Saccharolobus solfataricus (strain ATCC 35092 / DSM 1617 / JCM 11322 / P2) (Sulfolobus solfataricus).